The sequence spans 221 residues: NEP1-interacting protein-like 1 (221 aa).

Helical transmembrane passes span Leu35–Ile55, Val69–Trp89, and Gly95–Val115. The segment at Cys176–Arg218 adopts an RING-type; atypical zinc-finger fold.

It belongs to the RING-type zinc finger family. NIP subfamily.

Its subcellular location is the membrane. May be involved in the early steps of the plant defense signaling pathway. This is NEP1-interacting protein-like 1 (ATL27) from Arabidopsis thaliana (Mouse-ear cress).